Here is a 155-residue protein sequence, read N- to C-terminus: Small ribosomal subunit protein uS7c (155 aa).

The protein belongs to the universal ribosomal protein uS7 family. Part of the 30S ribosomal subunit.

The protein localises to the plastid. It is found in the chloroplast. Its function is as follows. One of the primary rRNA binding proteins, it binds directly to 16S rRNA where it nucleates assembly of the head domain of the 30S subunit. In Gunnera chilensis (Chilean rhubarb), this protein is Small ribosomal subunit protein uS7c (rps7).